The following is an 83-amino-acid chain: Large ribosomal subunit protein bL27c (83 aa).

The tract at residues 1-21 (MAHKKGAGSTKNGRDSNAKRL) is disordered.

The protein belongs to the bacterial ribosomal protein bL27 family.

It localises to the plastid. It is found in the chloroplast. The sequence is that of Large ribosomal subunit protein bL27c from Phaeodactylum tricornutum (strain CCAP 1055/1).